We begin with the raw amino-acid sequence, 130 residues long: Prefoldin subunit alpha (130 aa).

This sequence belongs to the prefoldin subunit alpha family. As to quaternary structure, heterohexamer of two alpha and four beta subunits.

The protein localises to the cytoplasm. Functionally, molecular chaperone capable of stabilizing a range of proteins. Seems to fulfill an ATP-independent, HSP70-like function in archaeal de novo protein folding. The polypeptide is Prefoldin subunit alpha (pfdA) (Thermoplasma acidophilum (strain ATCC 25905 / DSM 1728 / JCM 9062 / NBRC 15155 / AMRC-C165)).